A 168-amino-acid polypeptide reads, in one-letter code: G/U mismatch-specific DNA glycosylase (168 aa).

Belongs to the uracil-DNA glycosylase (UDG) superfamily. TDG/mug family. Binds DNA as a monomer.

The protein resides in the cytoplasm. It catalyses the reaction Specifically hydrolyzes mismatched double-stranded DNA and polynucleotides, releasing free uracil.. Excises ethenocytosine and uracil, which can arise by alkylation or deamination of cytosine, respectively, from the corresponding mispairs with guanine in ds-DNA. It is capable of hydrolyzing the carbon-nitrogen bond between the sugar-phosphate backbone of the DNA and the mispaired base. The complementary strand guanine functions in substrate recognition. Required for DNA damage lesion repair in stationary-phase cells. This chain is G/U mismatch-specific DNA glycosylase, found in Enterobacter sp. (strain 638).